Consider the following 126-residue polypeptide: UPF0538 protein C2orf76 homolog (126 aa).

This sequence belongs to the UPF0538 family.

The polypeptide is UPF0538 protein C2orf76 homolog (Xenopus tropicalis (Western clawed frog)).